A 176-amino-acid polypeptide reads, in one-letter code: uncharacterized protein (176 aa).

An N-terminal signal peptide occupies residues 1 to 22 (MKYNNIIFLGLCLGLTTYSALS). Cys-38 and Cys-78 are disulfide-bonded.

The protein belongs to the fimbrial protein family.

The protein localises to the fimbrium. This is an uncharacterized protein from Escherichia coli (strain K12).